The following is a 106-amino-acid chain: MVNVPKTRKTYCKGKQCKKHTQHKVTQYKAGKASLYSQGKRRYDRKQSGYGGQTKPVFHKKAKTTKKVVLRLECVACKTKLQLSLKRCKHFELGGDKKQKGAALQF.

The interval 37-56 is disordered; sequence SQGKRRYDRKQSGYGGQTKP.

The protein belongs to the eukaryotic ribosomal protein eL42 family.

In Pichia kudriavzevii (Yeast), this protein is Large ribosomal subunit protein eL42 (RPL44).